Reading from the N-terminus, the 403-residue chain is ATP phosphoribosyltransferase regulatory subunit (403 aa).

The protein belongs to the class-II aminoacyl-tRNA synthetase family. HisZ subfamily. As to quaternary structure, heteromultimer composed of HisG and HisZ subunits.

It localises to the cytoplasm. It functions in the pathway amino-acid biosynthesis; L-histidine biosynthesis; L-histidine from 5-phospho-alpha-D-ribose 1-diphosphate: step 1/9. Functionally, required for the first step of histidine biosynthesis. May allow the feedback regulation of ATP phosphoribosyltransferase activity by histidine. This chain is ATP phosphoribosyltransferase regulatory subunit, found in Nostoc punctiforme (strain ATCC 29133 / PCC 73102).